The chain runs to 158 residues: Large ribosomal subunit protein uL16 (158 aa).

This sequence belongs to the universal ribosomal protein uL16 family. In terms of assembly, part of the 50S ribosomal subunit.

Its function is as follows. Binds 23S rRNA and is also seen to make contacts with the A and possibly P site tRNAs. The chain is Large ribosomal subunit protein uL16 from Prochlorococcus marinus (strain MIT 9313).